The following is an 803-amino-acid chain: Translation initiation factor IF-2 (803 aa).

2 disordered regions span residues 95-125 and 138-178; these read PVVE…EKAE and EVKE…EREE. Residues 111–121 show a composition bias toward polar residues; the sequence is VPLTSDTTNLN. Positions 138–155 are enriched in basic and acidic residues; the sequence is EVKEEAKKTPSEKKETPK. Over residues 156–167 the composition is skewed to basic residues; the sequence is KGPRKETRRSRK. Residues 168–178 show a composition bias toward basic and acidic residues; the sequence is PDKEDKWEREE. The tr-type G domain maps to 302-471; sequence PRAPVVTIMG…LLQAEVLELK (170 aa). Residues 311-318 form a G1 region; the sequence is GHVDHGKT. Residue 311–318 coordinates GTP; sequence GHVDHGKT. A G2 region spans residues 336–340; the sequence is GITQH. The segment at 357 to 360 is G3; sequence DTPG. Residues 357–361 and 411–414 each bind GTP; these read DTPGH and NKID. Residues 411-414 are G4; it reads NKID. The G5 stretch occupies residues 447–449; that stretch reads SAK.

Belongs to the TRAFAC class translation factor GTPase superfamily. Classic translation factor GTPase family. IF-2 subfamily.

It localises to the cytoplasm. One of the essential components for the initiation of protein synthesis. Protects formylmethionyl-tRNA from spontaneous hydrolysis and promotes its binding to the 30S ribosomal subunits. Also involved in the hydrolysis of GTP during the formation of the 70S ribosomal complex. The polypeptide is Translation initiation factor IF-2 (Coxiella burnetii (strain CbuK_Q154) (Coxiella burnetii (strain Q154))).